The following is a 279-amino-acid chain: Dermonecrotic toxin LbSicTox-alphaIB1a (279 aa).

Histidine 11 is a catalytic residue. Mg(2+) is bound by residues glutamate 31 and aspartate 33. The active-site Nucleophile is histidine 47. 2 cysteine pairs are disulfide-bonded: cysteine 51-cysteine 57 and cysteine 53-cysteine 196. Position 91 (aspartate 91) interacts with Mg(2+).

It belongs to the arthropod phospholipase D family. Class II subfamily. Class IIa sub-subfamily. It depends on Mg(2+) as a cofactor. As to expression, expressed by the venom gland.

Its subcellular location is the secreted. It catalyses the reaction an N-(acyl)-sphingosylphosphocholine = an N-(acyl)-sphingosyl-1,3-cyclic phosphate + choline. The enzyme catalyses an N-(acyl)-sphingosylphosphoethanolamine = an N-(acyl)-sphingosyl-1,3-cyclic phosphate + ethanolamine. It carries out the reaction a 1-acyl-sn-glycero-3-phosphocholine = a 1-acyl-sn-glycero-2,3-cyclic phosphate + choline. The catalysed reaction is a 1-acyl-sn-glycero-3-phosphoethanolamine = a 1-acyl-sn-glycero-2,3-cyclic phosphate + ethanolamine. Its function is as follows. Dermonecrotic toxins cleave the phosphodiester linkage between the phosphate and headgroup of certain phospholipids (sphingolipid and lysolipid substrates), forming an alcohol (often choline) and a cyclic phosphate. This toxin acts on sphingomyelin (SM) with high activity (about 30.5-31.5 U/mg). It may also act on ceramide phosphoethanolamine (CPE), lysophosphatidylcholine (LPC) and lysophosphatidylethanolamine (LPE), but not on lysophosphatidylserine (LPS), and lysophosphatidylglycerol (LPG). It acts by transphosphatidylation, releasing exclusively cyclic phosphate products as second products. Induces dermonecrosis, hemolysis, increased vascular permeability, edema, inflammatory response, and platelet aggregation. Is lethal to mice. The sequence is that of Dermonecrotic toxin LbSicTox-alphaIB1a from Loxosceles boneti (North American fiddleback spider).